Consider the following 109-residue polypeptide: Small ribosomal subunit protein uS17A (109 aa).

Belongs to the universal ribosomal protein uS17 family. In terms of assembly, part of the 30S ribosomal subunit.

In terms of biological role, one of the primary rRNA binding proteins, it binds specifically to the 5'-end of 16S ribosomal RNA. This is Small ribosomal subunit protein uS17A from Methanosarcina acetivorans (strain ATCC 35395 / DSM 2834 / JCM 12185 / C2A).